The sequence spans 101 residues: Small ribosomal subunit protein uS14 (101 aa).

The protein belongs to the universal ribosomal protein uS14 family. In terms of assembly, part of the 30S ribosomal subunit. Contacts proteins S3 and S10.

In terms of biological role, binds 16S rRNA, required for the assembly of 30S particles and may also be responsible for determining the conformation of the 16S rRNA at the A site. This chain is Small ribosomal subunit protein uS14, found in Bartonella henselae (strain ATCC 49882 / DSM 28221 / CCUG 30454 / Houston 1) (Rochalimaea henselae).